A 372-amino-acid polypeptide reads, in one-letter code: Phospho-N-acetylmuramoyl-pentapeptide-transferase (372 aa).

The next 10 helical transmembrane spans lie at 21 to 41 (SLTLRALLAVITALAFSMIFG), 71 to 91 (TPTMGGVLILSAIGVSTLLWA), 98 to 118 (VWILLIVMIIFGAVGWADDWL), 134 to 154 (YFWLSMGALFVGISLYYIATL), 176 to 196 (MIPFSAVPFGIGFIIFTYFVI), 211 to 231 (GLAILPVVLVAAGLGAMAYVS), 251 to 271 (VIIVCGAMIGAGLGFLWFNAH), 275 to 295 (VFMGDVGALSLGAMLGTIAVM), 300 to 320 (IAFAIMGGLFVAEALSVMLQV), and 349 to 369 (QVVARFWIIAIILVILGLMTL).

The protein belongs to the glycosyltransferase 4 family. MraY subfamily. Mg(2+) serves as cofactor.

The protein resides in the cell inner membrane. The catalysed reaction is UDP-N-acetyl-alpha-D-muramoyl-L-alanyl-gamma-D-glutamyl-meso-2,6-diaminopimeloyl-D-alanyl-D-alanine + di-trans,octa-cis-undecaprenyl phosphate = di-trans,octa-cis-undecaprenyl diphospho-N-acetyl-alpha-D-muramoyl-L-alanyl-D-glutamyl-meso-2,6-diaminopimeloyl-D-alanyl-D-alanine + UMP. It participates in cell wall biogenesis; peptidoglycan biosynthesis. In terms of biological role, catalyzes the initial step of the lipid cycle reactions in the biosynthesis of the cell wall peptidoglycan: transfers peptidoglycan precursor phospho-MurNAc-pentapeptide from UDP-MurNAc-pentapeptide onto the lipid carrier undecaprenyl phosphate, yielding undecaprenyl-pyrophosphoryl-MurNAc-pentapeptide, known as lipid I. The sequence is that of Phospho-N-acetylmuramoyl-pentapeptide-transferase from Psychrobacter arcticus (strain DSM 17307 / VKM B-2377 / 273-4).